The chain runs to 302 residues: Cuticle collagen dpy-13 (302 aa).

Triple-helical region regions lie at residues 106–135 (GPQG…PGKA), 154–210 (GPPG…EGLP), and 219–278 (GEPG…PGTP). The interval 108–284 (QGAPGAPGKP…PGTPGERGIC (177 aa)) is disordered. Pro residues predominate over residues 144–159 (TPPPCKPCPQGPPGAP). Low complexity predominate over residues 188–197 (PKGPNGAPGK). Pro residues-rich tracts occupy residues 247–257 (QPGPKGPPGPD) and 268–277 (QPGPVGPPGT).

This sequence belongs to the cuticular collagen family. As to quaternary structure, collagen polypeptide chains are complexed within the cuticle by disulfide bonds and other types of covalent cross-links.

Nematode cuticles are composed largely of collagen-like proteins. The cuticle functions both as an exoskeleton and as a barrier to protect the worm from its environment. Mutations in dpy-13 affects the body shape. This chain is Cuticle collagen dpy-13 (dpy-13), found in Caenorhabditis elegans.